The sequence spans 344 residues: uncharacterized protein (344 aa).

The next 5 membrane-spanning stretches (helical) occupy residues F53–W73, W84–I104, I153–L173, F189–L209, and I275–F295.

Belongs to the steroid 5-alpha reductase family.

The protein localises to the endoplasmic reticulum membrane. This is an uncharacterized protein from Schizosaccharomyces pombe (strain 972 / ATCC 24843) (Fission yeast).